A 151-amino-acid chain; its full sequence is Nucleoside diphosphate kinase (151 aa).

6 residues coordinate ATP: K11, F59, R87, T93, R104, and N114. The active-site Pros-phosphohistidine intermediate is H117.

The protein belongs to the NDK family. In terms of assembly, homotetramer. Requires Mg(2+) as cofactor.

It is found in the cytoplasm. It catalyses the reaction a 2'-deoxyribonucleoside 5'-diphosphate + ATP = a 2'-deoxyribonucleoside 5'-triphosphate + ADP. It carries out the reaction a ribonucleoside 5'-diphosphate + ATP = a ribonucleoside 5'-triphosphate + ADP. Its function is as follows. Major role in the synthesis of nucleoside triphosphates other than ATP. The ATP gamma phosphate is transferred to the NDP beta phosphate via a ping-pong mechanism, using a phosphorylated active-site intermediate. The sequence is that of Nucleoside diphosphate kinase from Prochlorococcus marinus (strain NATL2A).